A 148-amino-acid polypeptide reads, in one-letter code: Large ribosomal subunit protein bL9 (148 aa).

The protein belongs to the bacterial ribosomal protein bL9 family.

In terms of biological role, binds to the 23S rRNA. The polypeptide is Large ribosomal subunit protein bL9 (Syntrophobacter fumaroxidans (strain DSM 10017 / MPOB)).